We begin with the raw amino-acid sequence, 199 residues long: Crossover junction endodeoxyribonuclease RuvC (199 aa).

Residues Asp17, Glu76, and Asp148 contribute to the active site. Mg(2+)-binding residues include Asp17, Glu76, and Asp148.

It belongs to the RuvC family. In terms of assembly, homodimer which binds Holliday junction (HJ) DNA. The HJ becomes 2-fold symmetrical on binding to RuvC with unstacked arms; it has a different conformation from HJ DNA in complex with RuvA. In the full resolvosome a probable DNA-RuvA(4)-RuvB(12)-RuvC(2) complex forms which resolves the HJ. Mg(2+) serves as cofactor.

It localises to the cytoplasm. It carries out the reaction Endonucleolytic cleavage at a junction such as a reciprocal single-stranded crossover between two homologous DNA duplexes (Holliday junction).. The RuvA-RuvB-RuvC complex processes Holliday junction (HJ) DNA during genetic recombination and DNA repair. Endonuclease that resolves HJ intermediates. Cleaves cruciform DNA by making single-stranded nicks across the HJ at symmetrical positions within the homologous arms, yielding a 5'-phosphate and a 3'-hydroxyl group; requires a central core of homology in the junction. The consensus cleavage sequence is 5'-(A/T)TT(C/G)-3'. Cleavage occurs on the 3'-side of the TT dinucleotide at the point of strand exchange. HJ branch migration catalyzed by RuvA-RuvB allows RuvC to scan DNA until it finds its consensus sequence, where it cleaves and resolves the cruciform DNA. This chain is Crossover junction endodeoxyribonuclease RuvC, found in Mannheimia succiniciproducens (strain KCTC 0769BP / MBEL55E).